Here is a 358-residue protein sequence, read N- to C-terminus: Peroxidase 54 (358 aa).

The signal sequence occupies residues 1 to 31 (MAVTSSSSTCDGFFIISLIVIVSSLFGTSSA). Q32 is subject to Pyrrolidone carboxylic acid. N-linked (GlcNAc...) asparagine glycosylation is found at N34 and N44. Cystine bridges form between C42-C122, C75-C80, C128-C330, and C207-C239. The Proton acceptor role is filled by H73. Residues D74, V77, G79, D81, and S83 each contribute to the Ca(2+) site. Residues N103, N161, and N166 are each glycosylated (N-linked (GlcNAc...) asparagine). Residue P170 coordinates substrate. N178 carries N-linked (GlcNAc...) asparagine glycosylation. H200 is a heme b binding site. T201 provides a ligand contact to Ca(2+). Residues N218, N228, and N242 are each glycosylated (N-linked (GlcNAc...) asparagine). Residues D252, T255, and D260 each contribute to the Ca(2+) site. N-linked (GlcNAc...) asparagine glycosylation is present at N298.

It belongs to the peroxidase family. Classical plant (class III) peroxidase subfamily. It depends on heme b as a cofactor. Requires Ca(2+) as cofactor.

The protein resides in the secreted. It localises to the vacuole. The enzyme catalyses 2 a phenolic donor + H2O2 = 2 a phenolic radical donor + 2 H2O. Functionally, removal of H(2)O(2), oxidation of toxic reductants, biosynthesis and degradation of lignin, suberization, auxin catabolism, response to environmental stresses such as wounding, pathogen attack and oxidative stress. These functions might be dependent on each isozyme/isoform in each plant tissue. This Arabidopsis thaliana (Mouse-ear cress) protein is Peroxidase 54 (PER54).